The chain runs to 332 residues: MAALVAAAALAAAEPAPAVPQAAGSGGPTSRRDFYWLRSFLAGGIAGCCAKTTVAPLDRVKVLLQAHNRHYKHLGVLSTLRAVPQKEGYLGLYKGNGAMMIRIFPYGAIQFMAFEHYKTFITTKLGVSGHVHRLMAGSMAGMTAVICTYPLDVVRVRLAFQVKGEHTYSGIIHAFKTIYAKEGGFLGFYRGLMPTILGMAPYAGVSFFTFGTLKSVGLSYAPALLGRPSSDNPNVLVLKTHINLLCGGVAGAIAQTISYPFDVTRRRMQLGAVLPEFEKCLTMRETMKYVYGQHGIRRGLYRGLSLNYIRCIPSQAVAFTTYELMKQFFHLN.

3 Solcar repeats span residues 34-120 (FYWL…YKTF), 128-216 (SGHV…LKSV), and 238-328 (LKTH…MKQF). The next 6 membrane-spanning stretches (helical) occupy residues 37–57 (LRSF…VAPL), 88–108 (GYLG…PYGA), 134–154 (LMAG…LDVV), 191–211 (GLMP…FTFG), 244–264 (LLCG…FDVT), and 299–319 (GLYR…AVAF).

Belongs to the mitochondrial carrier (TC 2.A.29) family.

It localises to the mitochondrion inner membrane. In terms of biological role, may be involved in the transport of coenzyme A in the mitochondrial matrix. Very little is known about the physiological function of this carrier. This chain is Solute carrier family 25 member 16, found in Mus musculus (Mouse).